The chain runs to 303 residues: MNKDQTLSHTTGRVSFKELQQIIKMGLVQGNLIPAFAGAWLAIVMTNHSFLSSIPQILLMLVGSTLIMGGACALNNYYDQDIDRIMPSKQSRPTVNDRISDRNLLMLSFGMMLIGEACLFLLNIPSGVLGLIGIVGYVSYYSIWSKRHTTWNTVVGSFPGAVPPLIGWVAIDGSLSLAAVALFLVVFCWQPIHFYALAIKRSDEYALANIPMLPSVKGFKRTRVSMFIWLVLLLPLPFLLSNLGVTFVVIATLLNLGWLALGFTTFRKESNQTKWATQMFVYSLNYLVVFFALVVVVSLIKMI.

Helical transmembrane passes span 25–45 (MGLVQGNLIPAFAGAWLAIVM), 54–74 (IPQILLMLVGSTLIMGGACAL), 118–138 (CLFLLNIPSGVLGLIGIVGYV), 166–186 (IGWVAIDGSLSLAAVALFLVV), 230–250 (LVLLLPLPFLLSNLGVTFVVI), and 280–300 (FVYSLNYLVVFFALVVVVSLI).

Belongs to the UbiA prenyltransferase family. Protoheme IX farnesyltransferase subfamily. In terms of assembly, interacts with CtaA.

The protein localises to the cell membrane. The catalysed reaction is heme b + (2E,6E)-farnesyl diphosphate + H2O = Fe(II)-heme o + diphosphate. The protein operates within porphyrin-containing compound metabolism; heme O biosynthesis; heme O from protoheme: step 1/1. Its function is as follows. Converts heme B (protoheme IX) to heme O by substitution of the vinyl group on carbon 2 of heme B porphyrin ring with a hydroxyethyl farnesyl side group. This chain is Protoheme IX farnesyltransferase, found in Staphylococcus epidermidis (strain ATCC 35984 / DSM 28319 / BCRC 17069 / CCUG 31568 / BM 3577 / RP62A).